The chain runs to 66 residues: Large ribosomal subunit protein bL35 (66 aa).

Residues 1 to 26 (MPKMKTHRGSAKRFKKTGSGKLKRSH) show a composition bias toward basic residues. The segment at 1–45 (MPKMKTHRGSAKRFKKTGSGKLKRSHAYTSHLFANKSQKQKRKLR) is disordered.

This sequence belongs to the bacterial ribosomal protein bL35 family.

This Bacillus velezensis (strain DSM 23117 / BGSC 10A6 / LMG 26770 / FZB42) (Bacillus amyloliquefaciens subsp. plantarum) protein is Large ribosomal subunit protein bL35.